The primary structure comprises 354 residues: Polyribonucleotide 5'-hydroxyl-kinase PF0112 (354 aa).

Residue G36 to T43 coordinates ATP.

Requires a divalent metal cation as cofactor.

It catalyses the reaction a 5'-end dephospho-2'-deoxyribonucleoside-DNA + ATP = a 5'-end 5'-phospho-2'-deoxyribonucleoside-DNA + ADP + H(+). It carries out the reaction a 5'-end dephospho-ribonucleoside-RNA + ATP = a 5'-end 5'-phospho-ribonucleoside-RNA + ADP + H(+). Its function is as follows. Polynucleotide kinase that can phosphorylate the 5'-hydroxyl groups of both single-stranded RNA (ssRNA) and single-stranded DNA (ssDNA). Exhibits a strong preference for ssRNA. This chain is Polyribonucleotide 5'-hydroxyl-kinase PF0112, found in Pyrococcus furiosus (strain ATCC 43587 / DSM 3638 / JCM 8422 / Vc1).